Consider the following 228-residue polypeptide: Octanoyltransferase (228 aa).

Residues 30–213 (NKVEDIMLLL…YFSRVFDFEP (184 aa)) enclose the BPL/LPL catalytic domain. Substrate-binding positions include 75–82 (RGGDVTYH), 143–145 (AIG), and 156–158 (GFA). Cys-174 (acyl-thioester intermediate) is an active-site residue.

Belongs to the LipB family.

It is found in the cytoplasm. It carries out the reaction octanoyl-[ACP] + L-lysyl-[protein] = N(6)-octanoyl-L-lysyl-[protein] + holo-[ACP] + H(+). The protein operates within protein modification; protein lipoylation via endogenous pathway; protein N(6)-(lipoyl)lysine from octanoyl-[acyl-carrier-protein]: step 1/2. In terms of biological role, catalyzes the transfer of endogenously produced octanoic acid from octanoyl-acyl-carrier-protein onto the lipoyl domains of lipoate-dependent enzymes. Lipoyl-ACP can also act as a substrate although octanoyl-ACP is likely to be the physiological substrate. This chain is Octanoyltransferase, found in Desulforamulus reducens (strain ATCC BAA-1160 / DSM 100696 / MI-1) (Desulfotomaculum reducens).